The sequence spans 489 residues: Rhamnulokinase (489 aa).

13–17 provides a ligand contact to ATP; it reads ASSGR. Cysteine 68 and cysteine 222 form a disulfide bridge. Substrate contacts are provided by residues glycine 83 and 236–238; that span reads HDT. Residue aspartate 237 is the Proton acceptor of the active site. Position 259 (threonine 259) interacts with ATP. Residue asparagine 296 participates in substrate binding. Glutamine 304 is a binding site for ATP. Cysteines 353 and 370 form a disulfide. Glycine 402 provides a ligand contact to ATP. A disulfide bridge links cysteine 413 with cysteine 417.

Belongs to the rhamnulokinase family. Mg(2+) serves as cofactor.

The enzyme catalyses L-rhamnulose + ATP = L-rhamnulose 1-phosphate + ADP + H(+). Its pathway is carbohydrate degradation; L-rhamnose degradation; glycerone phosphate from L-rhamnose: step 2/3. Functionally, involved in the catabolism of L-rhamnose (6-deoxy-L-mannose). Catalyzes the transfer of the gamma-phosphate group from ATP to the 1-hydroxyl group of L-rhamnulose to yield L-rhamnulose 1-phosphate. The protein is Rhamnulokinase of Salmonella enteritidis PT4 (strain P125109).